A 454-amino-acid polypeptide reads, in one-letter code: Ribosomal protein uS12 methylthiotransferase RimO (454 aa).

The region spanning 9–124 (PKIGFVSLGC…VMDAVHLHMP (116 aa)) is the MTTase N-terminal domain. The [4Fe-4S] cluster site is built by C18, C54, C83, C155, C159, and C162. A Radical SAM core domain is found at 141–382 (LTPKHFAYLK…MLLQEEISKK (242 aa)). Residues 385 to 454 (QAKVGKTMRV…ADAHDLWAEA (70 aa)) form the TRAM domain.

Belongs to the methylthiotransferase family. RimO subfamily. [4Fe-4S] cluster serves as cofactor.

The protein localises to the cytoplasm. It catalyses the reaction L-aspartate(89)-[ribosomal protein uS12]-hydrogen + (sulfur carrier)-SH + AH2 + 2 S-adenosyl-L-methionine = 3-methylsulfanyl-L-aspartate(89)-[ribosomal protein uS12]-hydrogen + (sulfur carrier)-H + 5'-deoxyadenosine + L-methionine + A + S-adenosyl-L-homocysteine + 2 H(+). Functionally, catalyzes the methylthiolation of an aspartic acid residue of ribosomal protein uS12. This Herminiimonas arsenicoxydans protein is Ribosomal protein uS12 methylthiotransferase RimO.